The following is a 327-amino-acid chain: Aspartate carbamoyltransferase catalytic subunit (327 aa).

Carbamoyl phosphate-binding residues include arginine 54 and threonine 55. Position 82 (lysine 82) interacts with L-aspartate. Positions 104, 134, and 137 each coordinate carbamoyl phosphate. Positions 177 and 232 each coordinate L-aspartate. Carbamoyl phosphate-binding residues include glycine 280 and proline 281.

It belongs to the aspartate/ornithine carbamoyltransferase superfamily. ATCase family. Heterododecamer (2C3:3R2) of six catalytic PyrB chains organized as two trimers (C3), and six regulatory PyrI chains organized as three dimers (R2).

It carries out the reaction carbamoyl phosphate + L-aspartate = N-carbamoyl-L-aspartate + phosphate + H(+). It functions in the pathway pyrimidine metabolism; UMP biosynthesis via de novo pathway; (S)-dihydroorotate from bicarbonate: step 2/3. Its function is as follows. Catalyzes the condensation of carbamoyl phosphate and aspartate to form carbamoyl aspartate and inorganic phosphate, the committed step in the de novo pyrimidine nucleotide biosynthesis pathway. The polypeptide is Aspartate carbamoyltransferase catalytic subunit (Micrococcus luteus (strain ATCC 4698 / DSM 20030 / JCM 1464 / CCM 169 / CCUG 5858 / IAM 1056 / NBRC 3333 / NCIMB 9278 / NCTC 2665 / VKM Ac-2230) (Micrococcus lysodeikticus)).